The chain runs to 140 residues: UPF0306 protein YhbP (140 aa).

It belongs to the UPF0306 family.

The chain is UPF0306 protein YhbP from Escherichia coli O6:H1 (strain CFT073 / ATCC 700928 / UPEC).